We begin with the raw amino-acid sequence, 122 residues long: Large ribosomal subunit protein uL14 (122 aa).

This sequence belongs to the universal ribosomal protein uL14 family. As to quaternary structure, part of the 50S ribosomal subunit. Forms a cluster with proteins L3 and L19. In the 70S ribosome, L14 and L19 interact and together make contacts with the 16S rRNA in bridges B5 and B8.

In terms of biological role, binds to 23S rRNA. Forms part of two intersubunit bridges in the 70S ribosome. In Acinetobacter baumannii (strain SDF), this protein is Large ribosomal subunit protein uL14.